The sequence spans 421 residues: Serine hydroxymethyltransferase (421 aa).

Residues L121 and 125–127 each bind (6S)-5,6,7,8-tetrahydrofolate; that span reads GHL. Residue K229 is modified to N6-(pyridoxal phosphate)lysine.

The protein belongs to the SHMT family. In terms of assembly, homodimer. Requires pyridoxal 5'-phosphate as cofactor.

It is found in the cytoplasm. It catalyses the reaction (6R)-5,10-methylene-5,6,7,8-tetrahydrofolate + glycine + H2O = (6S)-5,6,7,8-tetrahydrofolate + L-serine. It functions in the pathway one-carbon metabolism; tetrahydrofolate interconversion. It participates in amino-acid biosynthesis; glycine biosynthesis; glycine from L-serine: step 1/1. Functionally, catalyzes the reversible interconversion of serine and glycine with tetrahydrofolate (THF) serving as the one-carbon carrier. This reaction serves as the major source of one-carbon groups required for the biosynthesis of purines, thymidylate, methionine, and other important biomolecules. Also exhibits THF-independent aldolase activity toward beta-hydroxyamino acids, producing glycine and aldehydes, via a retro-aldol mechanism. The polypeptide is Serine hydroxymethyltransferase (Actinobacillus pleuropneumoniae serotype 7 (strain AP76)).